The following is a 300-amino-acid chain: UDP-N-acetylenolpyruvoylglucosamine reductase (300 aa).

The FAD-binding PCMH-type domain maps to 30–194; it reads KVGGPADFFA…LAAVFSLAAG (165 aa). Arginine 174 is an active-site residue. Residue serine 223 is the Proton donor of the active site. Glutamate 293 is a catalytic residue.

This sequence belongs to the MurB family. FAD serves as cofactor.

It localises to the cytoplasm. The catalysed reaction is UDP-N-acetyl-alpha-D-muramate + NADP(+) = UDP-N-acetyl-3-O-(1-carboxyvinyl)-alpha-D-glucosamine + NADPH + H(+). Its pathway is cell wall biogenesis; peptidoglycan biosynthesis. Functionally, cell wall formation. This chain is UDP-N-acetylenolpyruvoylglucosamine reductase, found in Geotalea uraniireducens (strain Rf4) (Geobacter uraniireducens).